We begin with the raw amino-acid sequence, 130 residues long: Small ribosomal subunit protein uS11c (130 aa).

It belongs to the universal ribosomal protein uS11 family. Part of the 30S ribosomal subunit.

The protein resides in the plastid. It is found in the chloroplast. The protein is Small ribosomal subunit protein uS11c of Stigeoclonium helveticum (Green alga).